A 409-amino-acid polypeptide reads, in one-letter code: Ubiquitin-associated domain-containing protein 1 (409 aa).

An N-acetylmethionine modification is found at methionine 1. Residues leucine 14–serine 98 form the Ubiquitin-like domain. A disordered region spans residues proline 101–aspartate 122. Basic and acidic residues predominate over residues alanine 108 to aspartate 122. Positions aspartate 187 to histidine 231 constitute a UBA 1 domain. Residues threonine 239–glutamate 273 are disordered. A compositionally biased stretch (low complexity) spans alanine 245–serine 268. Positions arginine 292–aspartate 332 constitute a UBA 2 domain. The STI1 domain maps to asparagine 357–methionine 396.

Component of the KPC complex composed of RNF123/KPC1 and UBAC1/KPC2. Interacts (via ubiquitin-like domain) with RNF123. Interacts (via ubiquitin-like and UBA domains) with the proteasome via its N-terminal domain.

The protein resides in the cytoplasm. It participates in protein modification; protein ubiquitination. Functionally, non-catalytic component of the KPC complex, a E3 ubiquitin-protein ligase complex that mediates polyubiquitination of target proteins, such as CDKN1B and NFKB1. The KPC complex catalyzes polyubiquitination and proteasome-mediated degradation of CDKN1B during G1 phase of the cell cycle. The KPC complex also acts as a key regulator of the NF-kappa-B signaling by promoting maturation of the NFKB1 component of NF-kappa-B by catalyzing ubiquitination of the NFKB1 p105 precursor. Within the KPC complex, UBAC1 acts as an adapter that promotes the transfer of target proteins that have been polyubiquitinated by RNF123/KPC1 to the 26S proteasome. In Mus musculus (Mouse), this protein is Ubiquitin-associated domain-containing protein 1 (Ubac1).